The primary structure comprises 822 residues: Probable RING finger protein 207 homolog (822 aa).

An RING-type zinc finger spans residues 8–42; sequence CTICKNEFEEPILLSCQHTTCRKCSTGSPSCKSCS. The B box-type 1; atypical zinc finger occupies 68-115; that stretch reads EEMEECANCEQISLPMFYCETCQQSLCLVCRNVTHQARMFSSHKIISS. Positions 73, 76, 97, and 102 each coordinate Zn(2+). The segment at 122-164 adopts a B box-type 2; degenerate zinc-finger fold; it reads YSSSLCKDHNEPYILYCSDVRKLVCIQCFNGRPLEERHSFISI. Coiled-coil stretches lie at residues 526–558 and 738–769; these read NSQN…GQSA and DKDE…KVSE.

This is Probable RING finger protein 207 homolog from Caenorhabditis elegans.